A 303-amino-acid polypeptide reads, in one-letter code: Diaminopimelate epimerase (303 aa).

Asn-15, Gln-47, and Asn-67 together coordinate substrate. The active-site Proton donor is Cys-76. Substrate is bound by residues 77–78 (GN), Asn-163, Asn-197, and 215–216 (ER). Cys-224 functions as the Proton acceptor in the catalytic mechanism. 225-226 (GS) provides a ligand contact to substrate. The interval 278–303 (FDPATGEWSRDTQGLQGSGNADRGAA) is disordered.

Belongs to the diaminopimelate epimerase family. Homodimer.

The protein resides in the cytoplasm. It catalyses the reaction (2S,6S)-2,6-diaminopimelate = meso-2,6-diaminopimelate. It participates in amino-acid biosynthesis; L-lysine biosynthesis via DAP pathway; DL-2,6-diaminopimelate from LL-2,6-diaminopimelate: step 1/1. Functionally, catalyzes the stereoinversion of LL-2,6-diaminopimelate (L,L-DAP) to meso-diaminopimelate (meso-DAP), a precursor of L-lysine and an essential component of the bacterial peptidoglycan. The chain is Diaminopimelate epimerase from Brucella abortus (strain S19).